A 300-amino-acid chain; its full sequence is Porphobilinogen deaminase (300 aa).

C241 carries the post-translational modification S-(dipyrrolylmethanemethyl)cysteine.

This sequence belongs to the HMBS family. As to quaternary structure, monomer. Requires dipyrromethane as cofactor.

It catalyses the reaction 4 porphobilinogen + H2O = hydroxymethylbilane + 4 NH4(+). Its pathway is porphyrin-containing compound metabolism; protoporphyrin-IX biosynthesis; coproporphyrinogen-III from 5-aminolevulinate: step 2/4. In terms of biological role, tetrapolymerization of the monopyrrole PBG into the hydroxymethylbilane pre-uroporphyrinogen in several discrete steps. The chain is Porphobilinogen deaminase from Sorangium cellulosum (strain So ce56) (Polyangium cellulosum (strain So ce56)).